A 238-amino-acid polypeptide reads, in one-letter code: Pyridoxine 5'-phosphate synthase (238 aa).

The 3-amino-2-oxopropyl phosphate site is built by Asn-7 and Arg-18. His-43 (proton acceptor) is an active-site residue. The 1-deoxy-D-xylulose 5-phosphate site is built by Arg-45 and His-50. The Proton acceptor role is filled by Glu-70. Thr-100 is a binding site for 1-deoxy-D-xylulose 5-phosphate. Residue His-190 is the Proton donor of the active site. 3-amino-2-oxopropyl phosphate contacts are provided by residues Asp-191 and 213–214; that span reads GH.

It belongs to the PNP synthase family. As to quaternary structure, homooctamer; tetramer of dimers.

It is found in the cytoplasm. The enzyme catalyses 3-amino-2-oxopropyl phosphate + 1-deoxy-D-xylulose 5-phosphate = pyridoxine 5'-phosphate + phosphate + 2 H2O + H(+). The protein operates within cofactor biosynthesis; pyridoxine 5'-phosphate biosynthesis; pyridoxine 5'-phosphate from D-erythrose 4-phosphate: step 5/5. In terms of biological role, catalyzes the complicated ring closure reaction between the two acyclic compounds 1-deoxy-D-xylulose-5-phosphate (DXP) and 3-amino-2-oxopropyl phosphate (1-amino-acetone-3-phosphate or AAP) to form pyridoxine 5'-phosphate (PNP) and inorganic phosphate. The sequence is that of Pyridoxine 5'-phosphate synthase from Phocaeicola vulgatus (strain ATCC 8482 / DSM 1447 / JCM 5826 / CCUG 4940 / NBRC 14291 / NCTC 11154) (Bacteroides vulgatus).